Reading from the N-terminus, the 276-residue chain is Homeobox protein TOS8 (276 aa).

Polar residues predominate over residues N176–Y185. The disordered stretch occupies residues N176–S199. The span at E189–S199 shows a compositional bias: basic residues. Positions A194 to G256 form a DNA-binding region, homeobox; TALE-type.

Belongs to the TALE/CUP9 homeobox family.

It localises to the nucleus. This chain is Homeobox protein TOS8 (TOS8), found in Saccharomyces cerevisiae (strain ATCC 204508 / S288c) (Baker's yeast).